A 92-amino-acid polypeptide reads, in one-letter code: UPF0213 protein MGAS9429_Spy1198 (92 aa).

Residues 4–80 enclose the GIY-YIG domain; the sequence is KKAYMYVLEC…KRKTRSQKLA (77 aa).

Belongs to the UPF0213 family.

The chain is UPF0213 protein MGAS9429_Spy1198 from Streptococcus pyogenes serotype M12 (strain MGAS9429).